Here is a 210-residue protein sequence, read N- to C-terminus: Vacuolar protein sorting-associated protein 28 homolog (210 aa).

The VPS28 N-terminal domain maps to 1 to 106 (MSSQNANLMR…REGRPITVKD (106 aa)). Positions 110-206 (NVLKHIASIV…AYQAFNKALN (97 aa)) constitute a VPS28 C-terminal domain.

This sequence belongs to the VPS28 family. Component of the ESCRT-I complex (endosomal sorting complex required for transport I). Expressed in embryos.

It is found in the endosome. Functionally, component of the ESCRT-I complex, a regulator of vesicular trafficking process. The protein is Vacuolar protein sorting-associated protein 28 homolog (vps-28) of Caenorhabditis elegans.